Here is a 540-residue protein sequence, read N- to C-terminus: Acyl-CoA synthetase 7 (540 aa).

Residues 186–194 (SSGTTGKPK), aspartate 415, arginine 430, and lysine 522 each bind ATP. Positions 538-540 (AKL) match the Microbody targeting signal motif.

The protein belongs to the ATP-dependent AMP-binding enzyme family. Expressed in intestine.

The protein resides in the peroxisome. The catalysed reaction is nonanoate + ATP + CoA = nonanoyl-CoA + AMP + diphosphate. It carries out the reaction IC-asc-C7 + ATP + CoA = IC-asc-C7-CoA + AMP + diphosphate. It catalyses the reaction IC-asc-C9 + ATP + CoA = IC-asc-C9-CoA + AMP + diphosphate. Plays a role in ascaroside pheromones biosynthesis, which regulates development and behavior. Specifically, activates the side chain of medium-chain indol-3-carbonyl (IC)-ascarosides for shortening through beta-oxidation. Converts IC-asc-C7 and IC-asc-C9 into IC-asc-C7-CoA and IC-asc-C9-CoA, respectively. May play a role in fatty-acid metabolism by activating and converting nonanoate (C9) into nonanoyl-CoA (C9-CoA). The chain is Acyl-CoA synthetase 7 from Caenorhabditis elegans.